A 131-amino-acid polypeptide reads, in one-letter code: Small ribosomal subunit protein uS8 (131 aa).

The protein belongs to the universal ribosomal protein uS8 family. As to quaternary structure, part of the 30S ribosomal subunit. Contacts proteins S5 and S12.

Its function is as follows. One of the primary rRNA binding proteins, it binds directly to 16S rRNA central domain where it helps coordinate assembly of the platform of the 30S subunit. The polypeptide is Small ribosomal subunit protein uS8 (Delftia acidovorans (strain DSM 14801 / SPH-1)).